The sequence spans 943 residues: Multimerin-2 (943 aa).

Residues 1–22 (MIPTLLLGFGVYLSWGLLGSWA) form the signal peptide. The region spanning 54–132 (RRNWCPYQKS…PGFQGPDCQD (79 aa)) is the EMI domain. 3 disulfides stabilise this stretch: Cys-58–Cys-122, Cys-85–Cys-92, and Cys-121–Cys-130. Ser-63 is a glycosylation site (O-linked (Fuc...) serine). O-linked (Fuc) threonine glycosylation is present at Thr-67. The disordered stretch occupies residues 128–150 (PDCQDHNPTANPEPTEPSGKLQE). Asn-205, Asn-214, Asn-249, Asn-261, Asn-350, Asn-379, Asn-439, and Asn-472 each carry an N-linked (GlcNAc...) asparagine glycan. Coiled coils occupy residues 391 to 480 (EEEL…HLHA) and 551 to 580 (RGEG…ALKT). N-linked (GlcNAc...) asparagine glycosylation is present at Asn-583. Positions 688-720 (DSGREEEAMTLAELEQEIRRLSSDVKQIGQCCE) form a coiled coil. Residues Asn-728 and Asn-766 are each glycosylated (N-linked (GlcNAc...) asparagine). Residues 778 to 801 (LSKKDKKQPRGPGESRKRDKKQVV) form a disordered region. The region spanning 815-943 (ETGSPVAFYA…AFGGFLMFKT (129 aa)) is the C1q domain. Asn-839 carries N-linked (GlcNAc...) asparagine glycosylation.

Heteromer of p110, p125, p140 and p200 subunits; disulfide-linked. Interacts with VEGFA. Interacts with CD93; this interaction promotes angiogenesis. Interacts with CD248. In terms of processing, N- and O-glycosylated. Post-translationally, processed by matrix metalloproteinases (MMPs) including MMP9 and, to a lesser degree, by MMP2 upon angiogenic stimulation. O-fucosylated within the EMI domain (at Ser-63 and Thr-67) by FUT10/POFUT3 and FUT11/POFUT4.

The protein resides in the secreted. It localises to the extracellular space. Its subcellular location is the extracellular matrix. In terms of biological role, extracellular matrix protein that plays significant roles in the vascular system and is required for the maintenance and stability of blood vessel. Affects several essential steps in angiogenesis including endothelial cell proliferation, migration, and tube formation. Positively regulates angiogenesis by acting as a ligand for CD93 receptor. The polypeptide is Multimerin-2 (Mus musculus (Mouse)).